The sequence spans 128 residues: Large ribosomal subunit protein eL8 (128 aa).

Belongs to the eukaryotic ribosomal protein eL8 family. In terms of assembly, part of the 50S ribosomal subunit. Probably part of the RNase P complex.

Its subcellular location is the cytoplasm. Its function is as follows. Multifunctional RNA-binding protein that recognizes the K-turn motif in ribosomal RNA, the RNA component of RNase P, box H/ACA, box C/D and box C'/D' sRNAs. The protein is Large ribosomal subunit protein eL8 of Ignicoccus hospitalis (strain KIN4/I / DSM 18386 / JCM 14125).